The sequence spans 144 residues: MAKKIIGYIKLQIPAGKANPSPPVGPALGQRGLNIMEFCKAFNAATQSMEPGLPIPVVITAFADKSFTFVMKTPPASILLKKAAGLQKGSSNPLTNKVGKLTRAQLEEIAKTKEPDLTAADLDAAVRTIAGSARSMGLDVEGVV.

Belongs to the universal ribosomal protein uL11 family. As to quaternary structure, part of the ribosomal stalk of the 50S ribosomal subunit. Interacts with L10 and the large rRNA to form the base of the stalk. L10 forms an elongated spine to which L12 dimers bind in a sequential fashion forming a multimeric L10(L12)X complex. One or more lysine residues are methylated.

Forms part of the ribosomal stalk which helps the ribosome interact with GTP-bound translation factors. The polypeptide is Large ribosomal subunit protein uL11 (Neisseria meningitidis serogroup C (strain 053442)).